Reading from the N-terminus, the 169-residue chain is Chorismate pyruvate-lyase (169 aa).

4 residues coordinate substrate: Met35, Arg77, Leu115, and Glu156.

Belongs to the UbiC family. Monomer.

It is found in the cytoplasm. It catalyses the reaction chorismate = 4-hydroxybenzoate + pyruvate. It participates in cofactor biosynthesis; ubiquinone biosynthesis. Removes the pyruvyl group from chorismate, with concomitant aromatization of the ring, to provide 4-hydroxybenzoate (4HB) for the ubiquinone pathway. The protein is Chorismate pyruvate-lyase of Cronobacter sakazakii (strain ATCC BAA-894) (Enterobacter sakazakii).